The sequence spans 286 residues: DegV domain-containing protein M6_Spy1658 (286 aa).

Positions phenylalanine 3–glycine 282 constitute a DegV domain. The hexadecanoate site is built by threonine 62 and serine 94.

In terms of biological role, may bind long-chain fatty acids, such as palmitate, and may play a role in lipid transport or fatty acid metabolism. This Streptococcus pyogenes serotype M6 (strain ATCC BAA-946 / MGAS10394) protein is DegV domain-containing protein M6_Spy1658.